Consider the following 303-residue polypeptide: 1-phosphofructokinase (303 aa).

248-249 (GD) lines the ATP pocket. Asp-249 functions as the Proton acceptor in the catalytic mechanism.

It belongs to the carbohydrate kinase PfkB family.

The enzyme catalyses beta-D-fructose 1-phosphate + ATP = beta-D-fructose 1,6-bisphosphate + ADP + H(+). In terms of biological role, catalyzes the ATP-dependent phosphorylation of fructose-l-phosphate to fructose-l,6-bisphosphate. The chain is 1-phosphofructokinase (fruK) from Bacillus subtilis (strain 168).